The chain runs to 158 residues: N-acetylgalactosamine-specific phosphotransferase enzyme IIB component 1 (158 aa).

One can recognise a PTS EIIB type-4 domain in the interval 1–158; the sequence is MTSPNILLTR…PGDQKEQIPD (158 aa). The active-site Pros-phosphohistidine intermediate is the His-17.

It localises to the cytoplasm. The phosphoenolpyruvate-dependent sugar phosphotransferase system (sugar PTS), a major carbohydrate active -transport system, catalyzes the phosphorylation of incoming sugar substrates concomitantly with their translocation across the cell membrane. This system is involved in N-acetylgalactosamine transport. This chain is N-acetylgalactosamine-specific phosphotransferase enzyme IIB component 1 (agaB), found in Escherichia coli (strain K12).